We begin with the raw amino-acid sequence, 596 residues long: Trehalase (596 aa).

The N-terminal stretch at 1–23 (MFKLPTISLLLVSWSCLVALSQA) is a signal peptide. Residues Arg-193, 200–201 (WD), Asn-237, and 246–248 (RSQ) each bind substrate. 2 N-linked (GlcNAc...) asparagine glycosylation sites follow: Asn-288 and Asn-293. Residues 303 to 323 (SSGPRPESYREDVETGEEFPT) form a disordered region. Residues 307-309 (RPE) and Gly-341 each bind substrate. The Proton donor/acceptor role is filled by Asp-343. N-linked (GlcNAc...) asparagine glycosylation is found at Asn-359, Asn-451, and Asn-516. Glu-541 acts as the Proton donor/acceptor in catalysis. A substrate-binding site is contributed by Glu-556.

It belongs to the glycosyl hydrolase 37 family. As to expression, in the adult brain predominantly expressed in glial cells (at protein level).

It carries out the reaction alpha,alpha-trehalose + H2O = alpha-D-glucose + beta-D-glucose. Enzyme that cleaves trehalose to produce 2 glucose molecules that can be used by the glycolytic pathway. Glycolysis is essential in glial cells but not in neurons; neurons rely on the citric acid cycle for their energy needs, and on lactate and alanine secreted into the hemolymph by glial cells to fuel it. This is Trehalase from Drosophila melanogaster (Fruit fly).